The primary structure comprises 214 residues: Ribosomal protein uL16-like (214 aa).

It belongs to the universal ribosomal protein uL16 family. In terms of assembly, component of a male germ cell-specific 60S large ribosomal subunit (LSU), which contains RPL10L and RPL39L, instead of RPL10 and RPL39 paralogs. The composition of the rest of the complex is similar to classical ribosomes. As to expression, almost testis-specific. Also expressed in pre- and postmenopausal ovary.

The protein resides in the cytoplasm. Its function is as follows. Testis-specific component of the ribosome, which is required for the transition from prophase to metaphase in male meiosis I. Compensates for the inactivated X-linked RPL10 paralog during spermatogenesis. The ribosome is a large ribonucleoprotein complex responsible for the synthesis of proteins in the cell. The male germ cell-specific ribosome displays a ribosomal polypeptide exit tunnel of distinct size and charge states compared with the classical ribosome. It is responsible for regulating the biosynthesis and folding of a subset of male germ-cell-specific proteins that are essential for the formation of sperm. This chain is Ribosomal protein uL16-like, found in Homo sapiens (Human).